The primary structure comprises 328 residues: Ribosomal RNA small subunit methyltransferase H (328 aa).

S-adenosyl-L-methionine is bound by residues 35-37 (GSH), aspartate 60, phenylalanine 87, aspartate 113, and glutamine 120.

Belongs to the methyltransferase superfamily. RsmH family.

It is found in the cytoplasm. It catalyses the reaction cytidine(1402) in 16S rRNA + S-adenosyl-L-methionine = N(4)-methylcytidine(1402) in 16S rRNA + S-adenosyl-L-homocysteine + H(+). Specifically methylates the N4 position of cytidine in position 1402 (C1402) of 16S rRNA. This Chlorobium chlorochromatii (strain CaD3) protein is Ribosomal RNA small subunit methyltransferase H.